The sequence spans 213 residues: Probable GTP-binding protein EngB (213 aa).

The EngB-type G domain occupies serine 30–isoleucine 204. Residues glycine 38 to serine 45, glycine 65 to leucine 69, aspartate 83 to glycine 86, threonine 150 to aspartate 153, and isoleucine 183 to alanine 185 each bind GTP. The Mg(2+) site is built by serine 45 and threonine 67.

This sequence belongs to the TRAFAC class TrmE-Era-EngA-EngB-Septin-like GTPase superfamily. EngB GTPase family. Mg(2+) is required as a cofactor.

In terms of biological role, necessary for normal cell division and for the maintenance of normal septation. The sequence is that of Probable GTP-binding protein EngB from Leptospira biflexa serovar Patoc (strain Patoc 1 / Ames).